The following is a 316-amino-acid chain: Probable cell division protein WhiA (316 aa).

The segment at residues 275–309 is a DNA-binding region (H-T-H motif); the sequence is TLKELGEMVSGGKISKSGINHRLRKIDEIAEKLRA.

Belongs to the WhiA family.

Involved in cell division and chromosome segregation. The polypeptide is Probable cell division protein WhiA (Bacillus cereus (strain G9842)).